We begin with the raw amino-acid sequence, 425 residues long: Enolase (425 aa).

Q162 is a (2R)-2-phosphoglycerate binding site. Residue E204 is the Proton donor of the active site. Residues D241, E282, and D309 each contribute to the Mg(2+) site. Residues K334, R363, S364, and K385 each coordinate (2R)-2-phosphoglycerate. Catalysis depends on K334, which acts as the Proton acceptor.

This sequence belongs to the enolase family. Mg(2+) serves as cofactor.

It localises to the cytoplasm. It is found in the secreted. The protein resides in the cell surface. It catalyses the reaction (2R)-2-phosphoglycerate = phosphoenolpyruvate + H2O. It functions in the pathway carbohydrate degradation; glycolysis; pyruvate from D-glyceraldehyde 3-phosphate: step 4/5. Functionally, catalyzes the reversible conversion of 2-phosphoglycerate (2-PG) into phosphoenolpyruvate (PEP). It is essential for the degradation of carbohydrates via glycolysis. The polypeptide is Enolase (Corynebacterium urealyticum (strain ATCC 43042 / DSM 7109)).